Here is a 366-residue protein sequence, read N- to C-terminus: uncharacterized protein (366 aa).

This is an uncharacterized protein from Caenorhabditis elegans.